A 611-amino-acid polypeptide reads, in one-letter code: Adenosylhomocysteinase 3 (611 aa).

Low complexity-rich tracts occupy residues M1–V14, A36–A57, and G68–P81. Residues M1–S184 are disordered. N-acetylserine is present on S2. An LISN domain, inhibits interaction with ITPR1 region spans residues S2 to D109. S107 carries the post-translational modification Phosphoserine. Over residues R135–L144 the composition is skewed to basic residues. Over residues S145 to D164 the composition is skewed to low complexity. 4 positions are modified to phosphoserine: S149, S152, S155, and S158. Substrate contacts are provided by T236, D310, and E335. S336–T338 is an NAD(+) binding site. Substrate is bound by residues K365 and D369. NAD(+)-binding positions include N370, G401–G406, E422, N457, M478–G479, and N525.

This sequence belongs to the adenosylhomocysteinase family. As to quaternary structure, homotetramer. Forms heteromultimers with AHCYL1 (via the C-terminal region). Interacts with ITPR1; with lower affinity than AHCYL1 and maybe via ITPR1. Interacts with SLC4A4. Interacts with ZCCHC4. NAD(+) serves as cofactor. Phosphorylated during neuronal differentiation at the LISN domain.

It is found in the cytoplasm. The protein localises to the microsome. The catalysed reaction is S-adenosyl-L-homocysteine + H2O = L-homocysteine + adenosine. The protein operates within amino-acid biosynthesis; L-homocysteine biosynthesis; L-homocysteine from S-adenosyl-L-homocysteine: step 1/1. In terms of biological role, may regulate the electrogenic sodium/bicarbonate cotransporter SLC4A4 activity and Mg(2+)-sensitivity. On the contrary of its homolog AHCYL1, does not regulate ITPR1 sensitivity to inositol 1,4,5-trisphosphate. The polypeptide is Adenosylhomocysteinase 3 (AHCYL2) (Homo sapiens (Human)).